A 174-amino-acid chain; its full sequence is Adipose-secreted signaling protein (174 aa).

Position 2 is an N-acetylalanine (alanine 2). Threonine 147 is modified (phosphothreonine).

Belongs to the ADISSP family.

It is found in the secreted. In terms of biological role, adipocyte-secreted protein (adipokine) that acts as a key regulator for white adipose tissue (WAT) thermogenesis and glucose homeostasis at least in part through activation of protein kinase A (PKA). The chain is Adipose-secreted signaling protein from Rattus norvegicus (Rat).